Reading from the N-terminus, the 468-residue chain is Neuraminidase (468 aa).

The Intravirion segment spans residues 1-15; sequence MNPNQKIITIGSASL. The involved in apical transport and lipid raft association stretch occupies residues 11-33; that stretch reads GSASLGLVIFNILLHVASITLGI. A helical transmembrane segment spans residues 16–36; that stretch reads GLVIFNILLHVASITLGIISV. The interval 36-80 is hypervariable stalk region; the sequence is VTKDNKVHICNTTEVYNETVRVETVVIPVNNTIYLNHEPEFLNNT. Topologically, residues 37–468 are virion surface; it reads TKDNKVHICN…AILPFDIDKM (432 aa). Asn46, Asn52, Asn65, and Asn78 each carry an N-linked (GlcNAc...) asparagine; by host glycan. A head of neuraminidase region spans residues 83–468; the sequence is LCDVSGFAIV…AILPFDIDKM (386 aa). Cystine bridges form between Cys84/Cys414, Cys116/Cys121, Cys176/Cys223, Cys225/Cys230, Cys271/Cys284, Cys273/Cys282, Cys310/Cys329, and Cys418/Cys444. Residue Arg110 participates in substrate binding. Asn138 carries N-linked (GlcNAc...) asparagine; by host glycosylation. The Proton donor/acceptor role is filled by Asp143. Position 144 (Arg144) interacts with substrate. 269–270 provides a ligand contact to substrate; sequence EE. Arg285 contributes to the substrate binding site. Residues Asp286, Gly290, and Asp316 each coordinate Ca(2+). Arg365 contributes to the substrate binding site. Asn395 is a glycosylation site (N-linked (GlcNAc...) asparagine; by host). Tyr399 (nucleophile) is an active-site residue.

Belongs to the glycosyl hydrolase 34 family. In terms of assembly, homotetramer. The cofactor is Ca(2+). In terms of processing, N-glycosylated.

It localises to the virion membrane. The protein localises to the host apical cell membrane. It carries out the reaction Hydrolysis of alpha-(2-&gt;3)-, alpha-(2-&gt;6)-, alpha-(2-&gt;8)- glycosidic linkages of terminal sialic acid residues in oligosaccharides, glycoproteins, glycolipids, colominic acid and synthetic substrates.. Its activity is regulated as follows. Inhibited by the neuraminidase inhibitors zanamivir (Relenza) and oseltamivir (Tamiflu). These drugs interfere with the release of progeny virus from infected cells and are effective against all influenza strains. Resistance to neuraminidase inhibitors is quite rare. In terms of biological role, catalyzes the removal of terminal sialic acid residues from viral and cellular glycoconjugates. Cleaves off the terminal sialic acids on the glycosylated HA during virus budding to facilitate virus release. Additionally helps virus spread through the circulation by further removing sialic acids from the cell surface. These cleavages prevent self-aggregation and ensure the efficient spread of the progeny virus from cell to cell. Otherwise, infection would be limited to one round of replication. Described as a receptor-destroying enzyme because it cleaves a terminal sialic acid from the cellular receptors. May facilitate viral invasion of the upper airways by cleaving the sialic acid moieties on the mucin of the airway epithelial cells. Likely to plays a role in the budding process through its association with lipid rafts during intracellular transport. May additionally display a raft-association independent effect on budding. Plays a role in the determination of host range restriction on replication and virulence. Sialidase activity in late endosome/lysosome traffic seems to enhance virus replication. The polypeptide is Neuraminidase (Aves).